Reading from the N-terminus, the 479-residue chain is Catalase easC (479 aa).

A compositionally biased stretch (polar residues) spans 1 to 13; the sequence is MASQVSLTAQGSG. The segment at 1 to 28 is disordered; sequence MASQVSLTAQGSGLSAPLNGPEHLTSTT. His53 is a catalytic residue. Residue Tyr343 coordinates heme. A disordered region spans residues 365–385; that stretch reads HAANDAPKTKKPAVPLQKQSR.

This sequence belongs to the catalase family. It depends on heme as a cofactor.

It participates in alkaloid biosynthesis; ergot alkaloid biosynthesis. In terms of biological role, catalase; part of the gene cluster that mediates the biosynthesis of fungal ergot alkaloid. DmaW catalyzes the first step of ergot alkaloid biosynthesis by condensing dimethylallyl diphosphate (DMAP) and tryptophan to form 4-dimethylallyl-L-tryptophan. The second step is catalyzed by the methyltransferase easF that methylates 4-dimethylallyl-L-tryptophan in the presence of S-adenosyl-L-methionine, resulting in the formation of 4-dimethylallyl-L-abrine. The catalase easC and the FAD-dependent oxidoreductase easE then transform 4-dimethylallyl-L-abrine to chanoclavine-I which is further oxidized by easD in the presence of NAD(+), resulting in the formation of chanoclavine-I aldehyde. Agroclavine dehydrogenase easG then mediates the conversion of chanoclavine-I aldehyde to agroclavine via a non-enzymatic adduct reaction: the substrate is an iminium intermediate that is formed spontaneously from chanoclavine-I aldehyde in the presence of glutathione. Further conversion of agroclavine to paspalic acid is a two-step process involving oxidation of agroclavine to elymoclavine and of elymoclavine to paspalic acid, the second step being performed by the elymoclavine oxidase cloA. However, cloA does not encode a functional enzyme indicating that C.fusiformis terminates its ergot alkaloid pathway at elymoclavine. This chain is Catalase easC, found in Claviceps fusiformis (Ergot fungus).